A 179-amino-acid chain; its full sequence is Large ribosomal subunit protein uL6 (179 aa).

This sequence belongs to the universal ribosomal protein uL6 family. Part of the 50S ribosomal subunit.

This protein binds to the 23S rRNA, and is important in its secondary structure. It is located near the subunit interface in the base of the L7/L12 stalk, and near the tRNA binding site of the peptidyltransferase center. In Chloroherpeton thalassium (strain ATCC 35110 / GB-78), this protein is Large ribosomal subunit protein uL6.